A 699-amino-acid chain; its full sequence is Transcription factor MYC2 (699 aa).

The segment at 25–60 (PWGAASTPPPPPPPPHHHHQQQQQQVLPPPAAAPAA) is disordered. The segment at 93–158 (IDVSTGASLL…AAPDEAVEEE (66 aa)) is JAZ-interaction domain. A disordered region spans residues 290-530 (DISVSKPPPP…EPLNHVEAER (241 aa)). Positions 306-321 (HFENGSTSTLTENPSP) are enriched in polar residues. Low complexity-rich tracts occupy residues 335–349 (PQRQ…QAQQ) and 387–412 (SSSG…PGSL). Composition is skewed to polar residues over residues 413-449 (FSQH…NNHP) and 459-472 (SFSS…STGT). The segment covering 478–494 (SESDHSDLEASVREVES) has biased composition (basic and acidic residues). Positions 506 to 514 (KRPRKRGRK) match the Nuclear localization signal motif. The span at 507 to 516 (RPRKRGRKPA) shows a compositional bias: basic residues. Basic and acidic residues predominate over residues 517–530 (NGREEPLNHVEAER). The interval 520–533 (EEPLNHVEAERQRR) is basic motif; degenerate. Residues 520-569 (EEPLNHVEAERQRREKLNQRFYALRAVVPNVSKMDKASLLGDAISYINEL) enclose the bHLH domain. The tract at residues 534-569 (EKLNQRFYALRAVVPNVSKMDKASLLGDAISYINEL) is helix-loop-helix motif. A disordered region spans residues 582–611 (TLQSQMESLKKERDARPPAPSGGGGDGGAR).

It belongs to the bHLH protein family. In terms of assembly, interacts with TIFY3/JAZ1. As to expression, highly expressed in spikelets and floral organs.

Its subcellular location is the nucleus. Transcriptional activator involved in jasmonate (JA) signaling pathway during spikelet development. Binds to the G2 region G-box (5'-CACGTG-3') of the MADS1 promoter and thus directly regulates the expression of MADS1. Its function in MADS1 activation is abolished by TIFY3/JAZ1 which directly target MYC2 during spikelet development. The sequence is that of Transcription factor MYC2 from Oryza sativa subsp. japonica (Rice).